The primary structure comprises 76 residues: MSSGALLPKPQMRGLLAKRLRVHIAGAFIVALGVAAAYKFGVAEPRKKAYAEFYRNYDSMKDFEEMRKAGIFQSAK.

The Mitochondrial matrix segment spans residues 4–22 (GALLPKPQMRGLLAKRLRV). Residues 23 to 44 (HIAGAFIVALGVAAAYKFGVAE) form a helical membrane-spanning segment. Residues 45 to 76 (PRKKAYAEFYRNYDSMKDFEEMRKAGIFQSAK) lie on the Mitochondrial intermembrane side of the membrane.

It belongs to the cytochrome c oxidase subunit 6c family. As to quaternary structure, component of the cytochrome c oxidase (complex IV, CIV), a multisubunit enzyme composed of 14 subunits. The complex is composed of a catalytic core of 3 subunits MT-CO1, MT-CO2 and MT-CO3, encoded in the mitochondrial DNA, and 11 supernumerary subunits COX4I, COX5A, COX5B, COX6A, COX6B, COX6C, COX7A, COX7B, COX7C, COX8 and NDUFA4, which are encoded in the nuclear genome. The complex exists as a monomer or a dimer and forms supercomplexes (SCs) in the inner mitochondrial membrane with NADH-ubiquinone oxidoreductase (complex I, CI) and ubiquinol-cytochrome c oxidoreductase (cytochrome b-c1 complex, complex III, CIII), resulting in different assemblies (supercomplex SCI(1)III(2)IV(1) and megacomplex MCI(2)III(2)IV(2)). Post-translationally, acetylation of Lys-61 is observed in liver mitochondria from fasted mice but not from fed mice.

The protein resides in the mitochondrion inner membrane. The protein operates within energy metabolism; oxidative phosphorylation. Functionally, component of the cytochrome c oxidase, the last enzyme in the mitochondrial electron transport chain which drives oxidative phosphorylation. The respiratory chain contains 3 multisubunit complexes succinate dehydrogenase (complex II, CII), ubiquinol-cytochrome c oxidoreductase (cytochrome b-c1 complex, complex III, CIII) and cytochrome c oxidase (complex IV, CIV), that cooperate to transfer electrons derived from NADH and succinate to molecular oxygen, creating an electrochemical gradient over the inner membrane that drives transmembrane transport and the ATP synthase. Cytochrome c oxidase is the component of the respiratory chain that catalyzes the reduction of oxygen to water. Electrons originating from reduced cytochrome c in the intermembrane space (IMS) are transferred via the dinuclear copper A center (CU(A)) of subunit 2 and heme A of subunit 1 to the active site in subunit 1, a binuclear center (BNC) formed by heme A3 and copper B (CU(B)). The BNC reduces molecular oxygen to 2 water molecules using 4 electrons from cytochrome c in the IMS and 4 protons from the mitochondrial matrix. This is Cytochrome c oxidase subunit 6C (Cox6c) from Mus musculus (Mouse).